The primary structure comprises 419 residues: UDP-N-acetylglucosamine 1-carboxyvinyltransferase (419 aa).

Phosphoenolpyruvate is bound at residue 22–23; sequence KN. Residue Arg-91 coordinates UDP-N-acetyl-alpha-D-glucosamine. Catalysis depends on Cys-115, which acts as the Proton donor. Cys-115 carries the post-translational modification 2-(S-cysteinyl)pyruvic acid O-phosphothioketal. UDP-N-acetyl-alpha-D-glucosamine is bound by residues 120-124, 160-163, Asp-305, and Val-327; these read RPVDL and KVSV.

This sequence belongs to the EPSP synthase family. MurA subfamily.

It is found in the cytoplasm. It carries out the reaction phosphoenolpyruvate + UDP-N-acetyl-alpha-D-glucosamine = UDP-N-acetyl-3-O-(1-carboxyvinyl)-alpha-D-glucosamine + phosphate. It functions in the pathway cell wall biogenesis; peptidoglycan biosynthesis. Its function is as follows. Cell wall formation. Adds enolpyruvyl to UDP-N-acetylglucosamine. In Shigella boydii serotype 18 (strain CDC 3083-94 / BS512), this protein is UDP-N-acetylglucosamine 1-carboxyvinyltransferase.